Here is a 427-residue protein sequence, read N- to C-terminus: POU domain protein CF1A (427 aa).

Disordered regions lie at residues 39–77 (YMQH…GLGS), 196–217 (HHHM…TPTS), 288–309 (TTGS…KKRT), and 390–427 (HDMH…LAAH). Residues 49-66 (AAAAAAHHQLPSSPSPNG) show a composition bias toward low complexity. The span at 67-77 (QGNGGGLGLGS) shows a compositional bias: gly residues. The POU-specific domain maps to 212 to 286 (EDTPTSDDLE…LLQKWLEEAD (75 aa)). Positions 304-363 (KRKKRTSIEVSVKGALEQHFHKQPKPSAQEITSLADSLQLEKEVVRVWFCNRRQKEKRMT) form a DNA-binding region, homeobox.

This sequence belongs to the POU transcription factor family. Class-3 subfamily. Coexpressed with acj6 in overlapping subsets of neurons in the embryonic epidermis and central nervous system. First detected in the precursor of the tracheal pits and the stomodeal invagination and later in the peripheral nervous system.

It localises to the nucleus. Its function is as follows. Binds to a DNA sequence element required for the expression of the dopa decarboxylase gene (Ddc) in specific dopaminergic neurons. Could also play an early role in specific ectodermal cells, and a subsequent role in the embryonic nervous system. The sequence is that of POU domain protein CF1A (vvl) from Drosophila melanogaster (Fruit fly).